Reading from the N-terminus, the 479-residue chain is Zinc metalloproteinase/disintegrin PMMP-1 (479 aa).

Positions Met1–Ser20 are cleaved as a signal peptide. Residues Ile21 to Val188 constitute a propeptide that is removed on maturation. The 197-residue stretch at Arg194 to Pro390 folds into the Peptidase M12B domain. Intrachain disulfides connect Cys305/Cys385, Cys345/Cys369, and Cys347/Cys352. Residue His330 coordinates Zn(2+). The active site involves Glu331. Residues His334 and His339 each contribute to the Zn(2+) site. N-linked (GlcNAc...) asparagine glycosylation occurs at Asn368. A propeptide spanning residues Leu391–Ala408 is cleaved from the precursor. Residues Thr398–Gly479 form the Disintegrin domain. Cystine bridges form between Cys412/Cys427, Cys414/Cys422, Cys421/Cys444, Cys435/Cys441, Cys440/Cys465, and Cys453/Cys472. The short motif at Arg457–Asp459 is the Cell attachment site element.

This sequence belongs to the venom metalloproteinase (M12B) family. P-II subfamily. P-IIa sub-subfamily. In terms of assembly, monomer. It depends on Zn(2+) as a cofactor. As to expression, expressed by the venom gland.

It localises to the secreted. Functionally, impairs hemostasis in the envenomed animal. In terms of biological role, inhibits platelet aggregation. The sequence is that of Zinc metalloproteinase/disintegrin PMMP-1 from Protobothrops mucrosquamatus (Taiwan habu).